A 354-amino-acid chain; its full sequence is UDP-N-acetylglucosamine--N-acetylmuramyl-(pentapeptide) pyrophosphoryl-undecaprenol N-acetylglucosamine transferase (354 aa).

Residues 13 to 15, Asn125, Ser189, Ile242, 261 to 266, and Gln286 contribute to the UDP-N-acetyl-alpha-D-glucosamine site; these read SGG and ALTVSE.

It belongs to the glycosyltransferase 28 family. MurG subfamily.

It localises to the cell inner membrane. The enzyme catalyses di-trans,octa-cis-undecaprenyl diphospho-N-acetyl-alpha-D-muramoyl-L-alanyl-D-glutamyl-meso-2,6-diaminopimeloyl-D-alanyl-D-alanine + UDP-N-acetyl-alpha-D-glucosamine = di-trans,octa-cis-undecaprenyl diphospho-[N-acetyl-alpha-D-glucosaminyl-(1-&gt;4)]-N-acetyl-alpha-D-muramoyl-L-alanyl-D-glutamyl-meso-2,6-diaminopimeloyl-D-alanyl-D-alanine + UDP + H(+). Its pathway is cell wall biogenesis; peptidoglycan biosynthesis. Functionally, cell wall formation. Catalyzes the transfer of a GlcNAc subunit on undecaprenyl-pyrophosphoryl-MurNAc-pentapeptide (lipid intermediate I) to form undecaprenyl-pyrophosphoryl-MurNAc-(pentapeptide)GlcNAc (lipid intermediate II). In Buchnera aphidicola subsp. Acyrthosiphon pisum (strain 5A), this protein is UDP-N-acetylglucosamine--N-acetylmuramyl-(pentapeptide) pyrophosphoryl-undecaprenol N-acetylglucosamine transferase.